We begin with the raw amino-acid sequence, 179 residues long: Signal peptidase complex subunit 3 (179 aa).

Topologically, residues 1–12 (MHTVLTRGNATV) are cytoplasmic. The chain crosses the membrane as a helical; Signal-anchor for type II membrane protein span at residues 13-33 (AYTLSVLACLTFSCFLSTVFL). Topologically, residues 34–179 (DYRTDANINT…FPADYATSSI (146 aa)) are lumenal. Residues Asn-73 and Asn-141 are each glycosylated (N-linked (GlcNAc...) asparagine).

Belongs to the SPCS3 family. Component of the signal peptidase complex (SPC) composed of a catalytic subunit twr/SEC11 and three accessory subunits Spase12/SPCS1, Spase25/SPCS2 and Spase22-23/SPCS3. The complex induces a local thinning of the ER membrane which is used to measure the length of the signal peptide (SP) h-region of protein substrates. This ensures the selectivity of the complex towards h-regions shorter than 18-20 amino acids.

The protein localises to the endoplasmic reticulum membrane. In terms of biological role, essential component of the signal peptidase complex (SPC) which catalyzes the cleavage of N-terminal signal sequences from nascent proteins as they are translocated into the lumen of the endoplasmic reticulum. Essential for the SPC catalytic activity, possibly by stabilizing and positioning the active center of the complex close to the lumenal surface. (Microbial infection) Plays an important role in infection by flaviviruses such as West Nile virus and Dengue virus type 2. The polypeptide is Signal peptidase complex subunit 3 (Spase22-23) (Drosophila melanogaster (Fruit fly)).